A 140-amino-acid polypeptide reads, in one-letter code: ATP synthase epsilon chain (140 aa).

The protein belongs to the ATPase epsilon chain family. As to quaternary structure, F-type ATPases have 2 components, CF(1) - the catalytic core - and CF(0) - the membrane proton channel. CF(1) has five subunits: alpha(3), beta(3), gamma(1), delta(1), epsilon(1). CF(0) has three main subunits: a, b and c.

Its subcellular location is the cell inner membrane. Its function is as follows. Produces ATP from ADP in the presence of a proton gradient across the membrane. The protein is ATP synthase epsilon chain of Alkalilimnicola ehrlichii (strain ATCC BAA-1101 / DSM 17681 / MLHE-1).